We begin with the raw amino-acid sequence, 449 residues long: Serine/threonine-protein phosphatase 2A activator 2 (449 aa).

Disordered regions lie at residues 1–72 (MDSS…DPST) and 378–416 (MSEQ…PTGW). A compositionally biased stretch (pro residues) spans 54–69 (NPTPVPETPALPPRPD). Positions 389–403 (EENEEEGGEVEVYDD) are enriched in acidic residues.

The protein belongs to the PTPA-type PPIase family.

The protein localises to the cytoplasm. The catalysed reaction is [protein]-peptidylproline (omega=180) = [protein]-peptidylproline (omega=0). PPIases accelerate the folding of proteins. It catalyzes the cis-trans isomerization of proline imidic peptide bonds in oligopeptides. Acts as a regulatory subunit for PP2A-like phosphatases modulating their activity or substrate specificity, probably by inducing a conformational change in the catalytic subunit, a direct target of the PPIase. Can reactivate inactive phosphatase PP2A-phosphatase methylesterase complexes (PP2Ai) in presence of ATP and Mg(2+) by dissociating the inactive form from the complex. The protein is Serine/threonine-protein phosphatase 2A activator 2 (rrd-2) of Neurospora crassa (strain ATCC 24698 / 74-OR23-1A / CBS 708.71 / DSM 1257 / FGSC 987).